The following is a 398-amino-acid chain: Phosphoglycerate kinase (398 aa).

Substrate contacts are provided by residues 23 to 25 (DFN), Arg-38, 61 to 64 (HMGK), Arg-122, and Arg-155. Residues Lys-206, Gly-297, Glu-328, and 354–357 (GGDS) each bind ATP.

It belongs to the phosphoglycerate kinase family. As to quaternary structure, monomer.

It localises to the cytoplasm. It catalyses the reaction (2R)-3-phosphoglycerate + ATP = (2R)-3-phospho-glyceroyl phosphate + ADP. It participates in carbohydrate degradation; glycolysis; pyruvate from D-glyceraldehyde 3-phosphate: step 2/5. This chain is Phosphoglycerate kinase, found in Clostridium botulinum (strain 657 / Type Ba4).